The sequence spans 360 residues: Chorismate synthase (360 aa).

R48 and R54 together coordinate NADP(+). FMN-binding positions include 125-127, 242-243, G283, 298-302, and R324; these read RSS, NG, and KPTSS.

The protein belongs to the chorismate synthase family. In terms of assembly, homotetramer. The cofactor is FMNH2.

It catalyses the reaction 5-O-(1-carboxyvinyl)-3-phosphoshikimate = chorismate + phosphate. It participates in metabolic intermediate biosynthesis; chorismate biosynthesis; chorismate from D-erythrose 4-phosphate and phosphoenolpyruvate: step 7/7. Catalyzes the anti-1,4-elimination of the C-3 phosphate and the C-6 proR hydrogen from 5-enolpyruvylshikimate-3-phosphate (EPSP) to yield chorismate, which is the branch point compound that serves as the starting substrate for the three terminal pathways of aromatic amino acid biosynthesis. This reaction introduces a second double bond into the aromatic ring system. The chain is Chorismate synthase from Gluconobacter oxydans (strain 621H) (Gluconobacter suboxydans).